A 451-amino-acid chain; its full sequence is Probable carboxypeptidase PMAA_093910 (451 aa).

The signal sequence occupies residues M1–A19. N149 carries an N-linked (GlcNAc...) asparagine glycan. D171 contacts Zn(2+). The active-site Proton acceptor is E203. Zn(2+) is bound at residue E204. N-linked (GlcNAc...) asparagine glycosylation is present at N354.

The protein belongs to the peptidase M20A family. The cofactor is Zn(2+).

It localises to the secreted. The sequence is that of Probable carboxypeptidase PMAA_093910 from Talaromyces marneffei (strain ATCC 18224 / CBS 334.59 / QM 7333) (Penicillium marneffei).